A 155-amino-acid chain; its full sequence is Ribosomal RNA large subunit methyltransferase H (155 aa).

S-adenosyl-L-methionine contacts are provided by residues L72, G103, and 122 to 127 (LSDLTL).

This sequence belongs to the RNA methyltransferase RlmH family. In terms of assembly, homodimer.

It is found in the cytoplasm. The catalysed reaction is pseudouridine(1915) in 23S rRNA + S-adenosyl-L-methionine = N(3)-methylpseudouridine(1915) in 23S rRNA + S-adenosyl-L-homocysteine + H(+). Functionally, specifically methylates the pseudouridine at position 1915 (m3Psi1915) in 23S rRNA. The protein is Ribosomal RNA large subunit methyltransferase H of Delftia acidovorans (strain DSM 14801 / SPH-1).